The following is a 357-amino-acid chain: MRSLSCIVCRQKKIKCDRKNPCTNCEQAGEKCMFKEYDSRKIRHPHSYVKALETRLAGLEAFWKRVKYAPVNEKLELLKTISFNDHLSPDISVSKTDTTFEFPVSLDIRGPNTIAFYGPTNVYGPPLTPSSPETPSFPPQNPSFSPLITDCLKLFFKWQYPQFLFINREAFLVDYYYRYHEGRYCSEHLLYAMCAIGSRMSVDPNIAALAKNFYQIAWNKIIEYGLGKSHITSIQCLLCLGYFNIGMGNTSLGWMLSGMAFRMGQDLGFQLNPRNWSVNDHPVVSPADAAVRSRIYWGSYVTDIFISFVLGRPTTLKKSDTSIPDSESLPDFDGVNEYRVNNALLLKEYLCIQSSVY.

Positions 6–32 form a DNA-binding region, zn(2)-C6 fungal-type; it reads CIVCRQKKIKCDRKNPCTNCEQAGEKC.

It is found in the nucleus. This is an uncharacterized protein from Schizosaccharomyces pombe (strain 972 / ATCC 24843) (Fission yeast).